The primary structure comprises 281 residues: 2,3,4,5-tetrahydropyridine-2,6-dicarboxylate N-succinyltransferase (281 aa).

R108 and D145 together coordinate substrate.

The protein belongs to the transferase hexapeptide repeat family. Homotrimer.

It is found in the cytoplasm. It catalyses the reaction (S)-2,3,4,5-tetrahydrodipicolinate + succinyl-CoA + H2O = (S)-2-succinylamino-6-oxoheptanedioate + CoA. Its pathway is amino-acid biosynthesis; L-lysine biosynthesis via DAP pathway; LL-2,6-diaminopimelate from (S)-tetrahydrodipicolinate (succinylase route): step 1/3. The chain is 2,3,4,5-tetrahydropyridine-2,6-dicarboxylate N-succinyltransferase from Nitrobacter winogradskyi (strain ATCC 25391 / DSM 10237 / CIP 104748 / NCIMB 11846 / Nb-255).